A 242-amino-acid chain; its full sequence is Eukaryotic translation initiation factor 3 subunit J (242 aa).

A compositionally biased stretch (acidic residues) spans 1–10 (MASWDDEDFE). 3 disordered regions span residues 1–58 (MASW…KAQR), 71–97 (MKLKPEDASTKRDRQRQAELDSDMMNA), and 201–242 (REEK…DDFM). The segment covering 11–21 (VPAAATPAVPA) has biased composition (low complexity). Over residues 23–38 (WDDDEEEDVMDSWDAE) the composition is skewed to acidic residues. Over residues 71–89 (MKLKPEDASTKRDRQRQAE) the composition is skewed to basic and acidic residues.

It belongs to the eIF-3 subunit J family. As to quaternary structure, component of the eukaryotic translation initiation factor 3 (eIF-3) complex.

It is found in the cytoplasm. Functionally, component of the eukaryotic translation initiation factor 3 (eIF-3) complex, which is involved in protein synthesis of a specialized repertoire of mRNAs and, together with other initiation factors, stimulates binding of mRNA and methionyl-tRNAi to the 40S ribosome. The eIF-3 complex specifically targets and initiates translation of a subset of mRNAs involved in cell proliferation. The chain is Eukaryotic translation initiation factor 3 subunit J from Yarrowia lipolytica (strain CLIB 122 / E 150) (Yeast).